A 38-amino-acid chain; its full sequence is Photosystem II reaction center protein X (38 aa).

A helical membrane pass occupies residues 9–29 (ISSLTAGGLVVLTIAVALIVI).

It belongs to the PsbX family. Type 1 subfamily. As to quaternary structure, PSII is composed of 1 copy each of membrane proteins PsbA, PsbB, PsbC, PsbD, PsbE, PsbF, PsbH, PsbI, PsbJ, PsbK, PsbL, PsbM, PsbT, PsbX, PsbY, PsbZ, Psb30/Ycf12, at least 3 peripheral proteins of the oxygen-evolving complex and a large number of cofactors. It forms dimeric complexes.

The protein resides in the plastid. The protein localises to the chloroplast thylakoid membrane. Functionally, involved in the binding and/or turnover of quinones at the Q(B) site of photosystem II (PSII). PSII is a light-driven water plastoquinone oxidoreductase, using light energy to abstract electrons from H(2)O, generating a proton gradient subsequently used for ATP formation. The chain is Photosystem II reaction center protein X from Trieres chinensis (Marine centric diatom).